Consider the following 300-residue polypeptide: Epimerase family protein SACOL0834 (300 aa).

The protein belongs to the NAD(P)-dependent epimerase/dehydratase family. SDR39U1 subfamily.

The sequence is that of Epimerase family protein SACOL0834 from Staphylococcus aureus (strain COL).